Here is a 788-residue protein sequence, read N- to C-terminus: Glucan 1,3-beta-glucosidase (788 aa).

A signal peptide spans 1–42; it reads MRFSSLLACLGAVGIQAAAIPFQRRVDNTTDSGSLDAAQAAA. N28, N233, N381, and N773 each carry an N-linked (GlcNAc...) asparagine glycan.

Belongs to the glycosyl hydrolase 55 family.

The enzyme catalyses Successive hydrolysis of beta-D-glucose units from the non-reducing ends of (1-&gt;3)-beta-D-glucans, releasing alpha-glucose.. The sequence is that of Glucan 1,3-beta-glucosidase (EXG1) from Cochliobolus carbonum (Maize leaf spot fungus).